A 114-amino-acid polypeptide reads, in one-letter code: Iron-sulfur cluster insertion protein ErpA (114 aa).

3 residues coordinate iron-sulfur cluster: Cys42, Cys106, and Cys108.

This sequence belongs to the HesB/IscA family. As to quaternary structure, homodimer. It depends on iron-sulfur cluster as a cofactor.

Its function is as follows. Required for insertion of 4Fe-4S clusters for at least IspG. The sequence is that of Iron-sulfur cluster insertion protein ErpA from Shigella boydii serotype 18 (strain CDC 3083-94 / BS512).